We begin with the raw amino-acid sequence, 185 residues long: MLNDVFADARDRMSKALDNLETDYKRLRTGRASVSLVDGIRAEYYGTPTALNQLATITIPEPRTIMIQPWDTSVIGEIEKSILKSELGLTPMSDGKVIRINIPVLTADRRRELVKVVKKMSEESKVAVRNIRRDVNEMIKDLKKEKEISEDEQFKAQEETQRITDDFIKKIDVVYSAKEKEILEI.

Belongs to the RRF family.

Its subcellular location is the cytoplasm. Its function is as follows. Responsible for the release of ribosomes from messenger RNA at the termination of protein biosynthesis. May increase the efficiency of translation by recycling ribosomes from one round of translation to another. This chain is Ribosome-recycling factor, found in Syntrophobacter fumaroxidans (strain DSM 10017 / MPOB).